Consider the following 381-residue polypeptide: Ecotin-like protein 3 (381 aa).

The tract at residues 232–381 is disordered; that stretch reads EHLEVCPKNN…GSKADPVDGK (150 aa). The segment covering 273-292 has biased composition (polar residues); sequence NESSPSRPRLSSTAYWPQEN. The segment covering 336 to 347 has biased composition (basic and acidic residues); it reads RKAEDDVYEKTM. Over residues 363–372 the composition is skewed to polar residues; the sequence is SASSTKSGNG.

The protein belongs to the protease inhibitor I11 (ecotin) family.

In Leishmania major, this protein is Ecotin-like protein 3.